The chain runs to 248 residues: Transcription factor MYBC1 (248 aa).

A DNA-binding region (myb-like GARP) is located at residues 102-161; it reads TLKRPRLVWTPQLHKRFVDAVGHLGIKNAVPKTIMQLMSVEGLTRENVASHLQKYRLYLR.

In terms of tissue distribution, expressed in roots, leaves, stems, petioles, filaments, stigma, pedicels, sepals, anthers, petals, and siliques.

The protein resides in the nucleus. Its function is as follows. Probable transcription factor that acts as a negative regulator of freezing tolerance via a CBF-independent pathway. The chain is Transcription factor MYBC1 from Arabidopsis thaliana (Mouse-ear cress).